The following is a 68-amino-acid chain: Conotoxin TsMMSK-021 (68 aa).

A signal peptide spans 1 to 20; sequence MMSKLGVLLTICLLLFPLTA. The propeptide occupies 21-50; it reads VPLDGDQHADRPADRMQDISSEQHPLFDPV. 3 cysteine pairs are disulfide-bonded: C53–C66, C54–C62, and C58–C65. P64 bears the 4-hydroxyproline mark.

It belongs to the conotoxin M superfamily. In terms of tissue distribution, expressed by the venom duct.

Its subcellular location is the secreted. The protein is Conotoxin TsMMSK-021 of Conus tessulatus (Tessellate cone).